Consider the following 279-residue polypeptide: Putative E3 ubiquitin-protein ligase C36B7.05c (279 aa).

Residues 27–122 (DDESAQCNNC…VCVNCRQQLS (96 aa)) form an FYVE-type zinc finger. Zn(2+) contacts are provided by cysteine 33, cysteine 36, cysteine 49, cysteine 52, cysteine 57, cysteine 60, cysteine 114, and cysteine 117. Position 200 is a phosphoserine (serine 200). The RING-type; atypical zinc finger occupies 230-273 (CIICFEEFAAGDRVARIEYCLCIFHLKCYRDWLSTGAAGCPVHA).

It is found in the cytoplasm. The protein resides in the nucleus. Its subcellular location is the endosome membrane. The protein localises to the vacuole membrane. The catalysed reaction is S-ubiquitinyl-[E2 ubiquitin-conjugating enzyme]-L-cysteine + [acceptor protein]-L-lysine = [E2 ubiquitin-conjugating enzyme]-L-cysteine + N(6)-ubiquitinyl-[acceptor protein]-L-lysine.. Its pathway is protein modification; protein ubiquitination. Functionally, functions as an E3 ubiquitin-protein ligase. Binds phospholipid vesicles containing phosphatidylinositol 3-phosphate. The chain is Putative E3 ubiquitin-protein ligase C36B7.05c from Schizosaccharomyces pombe (strain 972 / ATCC 24843) (Fission yeast).